Here is a 149-residue protein sequence, read N- to C-terminus: UPF0178 protein Mmwyl1_2258 (149 aa).

Belongs to the UPF0178 family.

This Marinomonas sp. (strain MWYL1) protein is UPF0178 protein Mmwyl1_2258.